A 344-amino-acid chain; its full sequence is AA9 family lytic polysaccharide monooxygenase J (344 aa).

The N-terminal stretch at 1–20 (MKSSLLVVLTAGLAVRDAIA) is a signal peptide. Positions 21 and 99 each coordinate Cu(2+). C58 and C194 are oxidised to a cystine. Positions 180 and 189 each coordinate O2. Y191 lines the Cu(2+) pocket. A disordered region spans residues 272–301 (PGGKPASGGSDGNAPEVAEPSGGEGSPSAP). A compositionally biased stretch (low complexity) spans 285-301 (APEVAEPSGGEGSPSAP). In terms of domain architecture, CBM1 spans 304–341 (CEVAAYGQCGGDQYSGCTQCASGYTCKAVSPPYYSQCA).

It belongs to the polysaccharide monooxygenase AA9 family. It depends on Cu(2+) as a cofactor.

The protein resides in the secreted. It carries out the reaction [(1-&gt;4)-beta-D-glucosyl]n+m + reduced acceptor + O2 = 4-dehydro-beta-D-glucosyl-[(1-&gt;4)-beta-D-glucosyl]n-1 + [(1-&gt;4)-beta-D-glucosyl]m + acceptor + H2O.. Functionally, lytic polysaccharide monooxygenase (LPMO) that depolymerizes crystalline and amorphous polysaccharides via the oxidation of scissile alpha- or beta-(1-4)-glycosidic bonds, yielding C4 oxidation products. Catalysis by LPMOs requires the reduction of the active-site copper from Cu(II) to Cu(I) by a reducing agent and H(2)O(2) or O(2) as a cosubstrate. This Neurospora crassa (strain ATCC 24698 / 74-OR23-1A / CBS 708.71 / DSM 1257 / FGSC 987) protein is AA9 family lytic polysaccharide monooxygenase J (gh61-10).